The following is a 328-amino-acid chain: GMP reductase (328 aa).

Catalysis depends on C177, which acts as the Thioimidate intermediate. Residue 206-229 (IVADGGIRYNGDIAKSIRFGASMV) participates in NADP(+) binding.

This sequence belongs to the IMPDH/GMPR family. GuaC type 2 subfamily.

It carries out the reaction IMP + NH4(+) + NADP(+) = GMP + NADPH + 2 H(+). Functionally, catalyzes the irreversible NADPH-dependent deamination of GMP to IMP. It functions in the conversion of nucleobase, nucleoside and nucleotide derivatives of G to A nucleotides, and in maintaining the intracellular balance of A and G nucleotides. The chain is GMP reductase from Levilactobacillus brevis (strain ATCC 367 / BCRC 12310 / CIP 105137 / JCM 1170 / LMG 11437 / NCIMB 947 / NCTC 947) (Lactobacillus brevis).